A 134-amino-acid chain; its full sequence is Viral interleukin-8 homolog (134 aa).

A signal peptide spans 1 to 22 (MQALLLVLVLFIVQIYLLPGNG).

This sequence belongs to the intercrine alpha (chemokine CxC) family. In terms of assembly, homodimer.

The protein localises to the secreted. In terms of biological role, plays a role in the early phase of cytolytic infections presumably by recruiting host B or T-lymphocytes. This chain is Viral interleukin-8 homolog (MDV078), found in Gallus gallus (Chicken).